Reading from the N-terminus, the 198-residue chain is MTKIIGITGGIASGKSTITNYLRQKGYQVIDADQVVHDLQANGGRLYQALVNWLGTAILNEAGELNRPKLSQLIFSSPDNLAKSSQLQNAIIRQELETRRDQLAKTEAIFFMDIPLLIEQNYRDWFDEIWLIAVSPETQIKRLKQRNGYSQEEAQQRLASQMPLQAKKVYADQIIDNNKTVENTKMQVDSQLRRLQNE.

The DPCK domain occupies 4–198 (IIGITGGIAS…DSQLRRLQNE (195 aa)). Residue 12–17 (ASGKST) coordinates ATP.

This sequence belongs to the CoaE family.

It is found in the cytoplasm. It carries out the reaction 3'-dephospho-CoA + ATP = ADP + CoA + H(+). Its pathway is cofactor biosynthesis; coenzyme A biosynthesis; CoA from (R)-pantothenate: step 5/5. In terms of biological role, catalyzes the phosphorylation of the 3'-hydroxyl group of dephosphocoenzyme A to form coenzyme A. This chain is Dephospho-CoA kinase, found in Streptococcus mutans serotype c (strain ATCC 700610 / UA159).